A 331-amino-acid polypeptide reads, in one-letter code: Coiled-coil domain-containing protein 92 (331 aa).

Coiled-coil stretches lie at residues 18 to 44 and 76 to 152; these read MAATNLENQLHSAQKNLLFLQREHAST and DGTS…EQRA. Residues 171-184 are compositionally biased toward low complexity; that stretch reads SSSGTSDASPSGSP. The tract at residues 171-212 is disordered; it reads SSSGTSDASPSGSPVLASYKPAPPKDKLPETPRRRMKKSLSA. Over residues 193 to 203 the composition is skewed to basic and acidic residues; sequence PPKDKLPETPR. The residue at position 209 (S209) is a Phosphoserine.

As to quaternary structure, interacts with CEP164. (Microbial infection) Interacts with ebolavirus protein NP; this interaction sequesters NP in the cytoplasm. Phosphorylated at Ser-209 by TTBK2.

It localises to the cytoplasm. It is found in the cytoskeleton. The protein localises to the microtubule organizing center. Its subcellular location is the centrosome. The protein resides in the centriole. Interferon-stimulated protein that plays a role in innate immunity. Strongly inhibits ebolavirus transcription and replication. Forms a complex with viral RNA-bound nucleocapsid NP and thereby prevents the transport of NP to the cell surface. The chain is Coiled-coil domain-containing protein 92 (CCDC92) from Homo sapiens (Human).